We begin with the raw amino-acid sequence, 393 residues long: Myb-related transcription factor, partner of profilin (393 aa).

Low complexity predominate over residues methionine 1–glycine 11. Residues methionine 1–lysine 21 form a disordered region. In terms of domain architecture, Myb-like spans threonine 16–lysine 88. Positions phenylalanine 87 to arginine 90 match the Nuclear localization signal motif. 3 disordered regions span residues glycine 125 to leucine 254, proline 290 to valine 323, and isoleucine 348 to proline 393. The segment covering alanine 142–arginine 157 has biased composition (low complexity). Over residues leucine 160–aspartate 171 the composition is skewed to basic and acidic residues. A compositionally biased stretch (polar residues) spans proline 173–glutamate 184. 4 stretches are compositionally biased toward pro residues: residues proline 219–threonine 229, serine 238–threonine 247, proline 296–alanine 320, and lysine 359–proline 368. Residues histidine 375–proline 393 are compositionally biased toward basic residues. 2 consecutive short sequence motifs (nuclear localization signal) follow at residues lysine 376–lysine 379 and arginine 384–arginine 387.

Interacts with PFN1. Homodimer and heterodimer with PFN1. Ubiquitous. Highly expressed in brain, liver and testis. Moderate expression in heart, lung and skeletal muscle. Low expression in spleen and kidney.

It is found in the nucleus. Functionally, transcriptional repressor; DNA-binding protein that specifically recognizes the core sequence 5'-YAAC[GT]G-3'. Dimerization with PFN1 reduces its DNA-binding capacity. This is Myb-related transcription factor, partner of profilin (Mypop) from Mus musculus (Mouse).